The primary structure comprises 180 residues: UPF0134 protein MPN_127 (180 aa).

Belongs to the UPF0134 family.

The chain is UPF0134 protein MPN_127 from Mycoplasma pneumoniae (strain ATCC 29342 / M129 / Subtype 1) (Mycoplasmoides pneumoniae).